The sequence spans 98 residues: Cystatin-B (98 aa).

Residues 4-83 (GGTSQPVDAD…PCNGETLELS (80 aa)) form the Cystatin domain. The Secondary area of contact signature appears at 46–50 (QCVPG).

This sequence belongs to the cystatin family. Ubiquitously expressed in normal and lipopolysaccharide (LPS)-stimulated tissues including brain, eye, gullet, heart, liver, muscle, stomach, kidney, spleen, pyloric ceca, intestine and gill.

It is found in the cytoplasm. Greatly decreased inhibitory activity against papain protease by metal ions including ZnSO(4), CuSO(4), HgCl(2) and CoCl(2). Decreased inhibitory activity against papain protease by detergents including Tween 20, SDS and Brij 35. Thiol protease inhibitor. Has high papain, bovine cathepsin B and fish cathepsins F and X inhibitory activity and inhibits fish cathepsins L, S and K to a lesser extent in vitro. May be involved in innate immunity. This chain is Cystatin-B, found in Paralichthys olivaceus (Bastard halibut).